The following is a 72-amino-acid chain: Translation initiation factor IF-1 (72 aa).

Residues 1–72 (MAKEDVIEMQ…SKGRIVFRAR (72 aa)) enclose the S1-like domain.

It belongs to the IF-1 family. In terms of assembly, component of the 30S ribosomal translation pre-initiation complex which assembles on the 30S ribosome in the order IF-2 and IF-3, IF-1 and N-formylmethionyl-tRNA(fMet); mRNA recruitment can occur at any time during PIC assembly.

Its subcellular location is the cytoplasm. Its function is as follows. One of the essential components for the initiation of protein synthesis. Stabilizes the binding of IF-2 and IF-3 on the 30S subunit to which N-formylmethionyl-tRNA(fMet) subsequently binds. Helps modulate mRNA selection, yielding the 30S pre-initiation complex (PIC). Upon addition of the 50S ribosomal subunit IF-1, IF-2 and IF-3 are released leaving the mature 70S translation initiation complex. The sequence is that of Translation initiation factor IF-1 from Photobacterium profundum (strain SS9).